The primary structure comprises 543 residues: Biotinidase (543 aa).

An N-terminal signal peptide occupies residues 1-41; that stretch reads MAHAHIQGGRRAKSRFVVCIMSGARSKLALFLCGCYVVALG. The region spanning 72–351 is the CN hydrolase domain; the sequence is NPLALISRQE…VGLIGAENAT (280 aa). The active-site Proton acceptor is E112. N-linked (GlcNAc...) asparagine glycosylation occurs at N119. An N-linked (GlcNAc...) (complex) asparagine glycan is attached at N150. N203 is a glycosylation site (N-linked (GlcNAc...) asparagine). K212 acts as the Proton donor in catalysis. Residue C245 is the Nucleophile of the active site. N349, N402, and N489 each carry an N-linked (GlcNAc...) asparagine glycan.

It belongs to the carbon-nitrogen hydrolase superfamily. BTD/VNN family.

The protein resides in the secreted. Its subcellular location is the extracellular space. The enzyme catalyses biocytin + H2O = biotin + L-lysine. The catalysed reaction is biotin amide + H2O = biotin + NH4(+). In terms of biological role, catalytic release of biotin from biocytin, the product of biotin-dependent carboxylases degradation. The sequence is that of Biotinidase from Homo sapiens (Human).